Consider the following 414-residue polypeptide: D-mannose isomerase (414 aa).

Catalysis depends on proton donor/acceptor residues His255 and His390.

This sequence belongs to the N-acylglucosamine 2-epimerase family. Monomer.

It catalyses the reaction D-mannose = D-fructose. Strongly inhibited by Ag(2+), Cu(2+) and cetyltrimethyl ammonium bromide (CTAB). Its function is as follows. Catalyzes the reversible isomerization of D-mannose to D-fructose. Shows high specific activity towards mannose and fructose, and has no detectable activity towards other monosaccharides and disaccharides. This is D-mannose isomerase from Pseudomonas cannabina pv. alisalensis.